Reading from the N-terminus, the 1062-residue chain is Roc-COR-CHAT protease (1062 aa).

8 LRR repeats span residues 70 to 94, 95 to 116, 115 to 141, 142 to 159, 160 to 180, 181 to 203, 204 to 226, and 228 to 249; these read LAGL…HLQQ, LRLL…GSMP, MPLL…ALQK, LDVS…SACP, ALWW…MPAG, FKAL…NGKL, PKLV…LLLP, and GLET…IRGS. The COR domain occupies 470–660; that stretch reads DWLGVMEELQ…GLMWKDNVVF (191 aa). The segment at 836–856 is disordered; that stretch reads ERDNDHTGLSDSSDQEDETFT. Residues histidine 931 and cysteine 980 contribute to the active site.

Its function is as follows. A dedicated protease for substrate gasdermin bGSDM; cleaves the bGSDM precursor, releasing the pore-forming moiety, which integrates into the membrane and triggers cell death. Probably involved in defense against bacteriophages. Expression of bGSDM and this neighboring protease is highly toxic in E.coli. The sequence is that of Roc-COR-CHAT protease from Unknown prokaryotic organism.